Here is a 923-residue protein sequence, read N- to C-terminus: Mitochondrial 10-formyltetrahydrofolate dehydrogenase (923 aa).

The N-terminal 19 residues, 1 to 19 (MLRRGSQALRRFSTGRVYF), are a transit peptide targeting the mitochondrion; not cleaved. Residues 23–331 (LKLALIGQSL…PASQYFSTGE (309 aa)) are hydrolase domain. Ser-31 carries the phosphoserine modification. Lys-60 is modified (N6-succinyllysine). Residue 110-112 (QFI) coordinates (6R)-10-formyltetrahydrofolate. His-128 serves as the catalytic Proton donor. Asp-164 contacts (6R)-10-formyltetrahydrofolate. The Carrier domain maps to 339-416 (AEEVKVAETI…GFIQKVVRKL (78 aa)). Position 375 is an O-(pantetheine 4'-phosphoryl)serine (Ser-375). The aldehyde dehydrogenase domain stretch occupies residues 438-923 (MVKMPYQCFI…LKTKTVTLEY (486 aa)). NADP(+)-binding positions include 592 to 594 (IPW) and 618 to 621 (KPAQ). Ser-650 carries the post-translational modification Phosphoserine. NADP(+)-binding positions include 651-656 (GGIAGQ) and 671-672 (GS). Residue Lys-681 is modified to N6-succinyllysine. Glu-694 functions as the Proton acceptor in the catalytic mechanism. An NADP(+)-binding site is contributed by 694–695 (EL). Cys-728 (proton donor) is an active-site residue. Lys-778 is a binding site for NADP(+). An N6-succinyllysine modification is found at Lys-788. NADP(+) is bound at residue 825 to 827 (ESF). Lys-903 bears the N6-acetyllysine mark.

This sequence in the N-terminal section; belongs to the GART family. It in the C-terminal section; belongs to the aldehyde dehydrogenase family. ALDH1L subfamily. Post-translationally, phosphopantetheinylation at Ser-375 by AASDHPPT is required for the formyltetrahydrofolate dehydrogenase activity. As to expression, highly expressed in pancreas, heart, brain and skeletal muscle.

It localises to the mitochondrion. It catalyses the reaction (6R)-10-formyltetrahydrofolate + NADP(+) + H2O = (6S)-5,6,7,8-tetrahydrofolate + CO2 + NADPH + H(+). Functionally, mitochondrial 10-formyltetrahydrofolate dehydrogenase that catalyzes the NADP(+)-dependent conversion of 10-formyltetrahydrofolate to tetrahydrofolate and carbon dioxide. This Homo sapiens (Human) protein is Mitochondrial 10-formyltetrahydrofolate dehydrogenase.